The following is a 277-amino-acid chain: Undecaprenyl-diphosphatase (277 aa).

The next 7 membrane-spanning stretches (helical) occupy residues 5–25 (WTAA…FLPI), 44–64 (RAMA…VWEF), 86–106 (LNLL…ADTI), 110–130 (LFNA…MLWA), 184–204 (AATE…AVYS), 219–239 (VFAI…RALL), and 255–275 (IAFG…WASA).

Belongs to the UppP family.

It is found in the cell inner membrane. The enzyme catalyses di-trans,octa-cis-undecaprenyl diphosphate + H2O = di-trans,octa-cis-undecaprenyl phosphate + phosphate + H(+). In terms of biological role, catalyzes the dephosphorylation of undecaprenyl diphosphate (UPP). Confers resistance to bacitracin. The sequence is that of Undecaprenyl-diphosphatase from Pseudomonas savastanoi pv. phaseolicola (strain 1448A / Race 6) (Pseudomonas syringae pv. phaseolicola (strain 1448A / Race 6)).